We begin with the raw amino-acid sequence, 590 residues long: Arginine--tRNA ligase (590 aa).

The 'HIGH' region motif lies at 130–140 (PNIAKEMHVGH).

This sequence belongs to the class-I aminoacyl-tRNA synthetase family. Monomer.

It localises to the cytoplasm. It catalyses the reaction tRNA(Arg) + L-arginine + ATP = L-arginyl-tRNA(Arg) + AMP + diphosphate. The polypeptide is Arginine--tRNA ligase (Synechococcus sp. (strain CC9311)).